We begin with the raw amino-acid sequence, 114 residues long: Pro-FMRFamide-related neuropeptide FF (114 aa).

The N-terminal stretch at 1 to 21 is a signal peptide; that stretch reads MDSKWAAVLLLLLLLRNWGHA. Residues 22–69 constitute a propeptide that is removed on maturation; the sequence is EEAGSWGEDQVFAEEDKGPHPSQYAHTPDRIQTPGSLMRVLLQAMERP. Residues 29–51 are disordered; that stretch reads EDQVFAEEDKGPHPSQYAHTPDR. Position 82 is a phenylalanine amide (F82). A propeptide spanning residues 85 to 100 is cleaved from the precursor; the sequence is NAWGPWSKEQLSPQAR. F111 bears the Phenylalanine amide mark.

This sequence belongs to the FARP (FMRFamide related peptide) family.

It localises to the secreted. Its function is as follows. Morphine modulating peptides. Have wide-ranging physiologic effects, including the modulation of morphine-induced analgesia, elevation of arterial blood pressure, and increased somatostatin secretion from the pancreas. Neuropeptide FF and SF potentiate and sensitize ASIC2 and ASIC3 channels. This Rattus norvegicus (Rat) protein is Pro-FMRFamide-related neuropeptide FF (Npff).